Reading from the N-terminus, the 359-residue chain is Type-1 angiotensin II receptor (359 aa).

Over 1–25 (MMLNSSTEDGIKRIQDDCPKAGRHN) the chain is Extracellular. N4 carries an N-linked (GlcNAc...) asparagine glycan. Residues Q15 and D17 each contribute to the angiotensin II site. Cystine bridges form between C18–C274 and C101–C180. The helical transmembrane segment at 26–55 (YIFVMIPTLYSIIFVVGIFGNSLAVIVIYF) threads the bilayer. Residues 56 to 61 (YMKLKT) are Cytoplasmic-facing. A helical transmembrane segment spans residues 62 to 89 (VASVFLLNLALADLCFLLTLPLWAVYTA). Topologically, residues 90-98 (MEYRWPFGN) are extracellular. A helical membrane pass occupies residues 99 to 125 (YLCKIASASVSFNLYASVFLLTCLSID). Residues 126–141 (RYLAIVHPMKSRLRRT) are Cytoplasmic-facing. Residues 142 to 165 (MLVAKVTCIIIWLLAGLASLPAII) traverse the membrane as a helical segment. Topologically, residues 166 to 190 (HRNVFFIENTNITVCAFHYESQNST) are extracellular. Residue R167 coordinates angiotensin II. An N-linked (GlcNAc...) asparagine glycan is attached at N176. F182, H183, and Y184 together coordinate angiotensin II. N188 carries an N-linked (GlcNAc...) asparagine glycan. The helical transmembrane segment at 191-216 (LPIGLGLTKNILGFLFPFLIILTSYT) threads the bilayer. Residue K199 coordinates angiotensin II. At 217–239 (LIWKALKKAYEIQKNKPRNDDIF) the chain is on the cytoplasmic side. The chain crosses the membrane as a helical span at residues 240-268 (KIIMAIVLFFFFSWVPHQIFTFLDVLIQL). Residues 269-278 (GVIHDCRIAD) are Extracellular-facing. Residues 279–304 (IVDTAMPITICIAYFNNCLNPLFYGF) traverse the membrane as a helical segment. Residues 305–359 (LGKKFKKYFLQLLKYIPPKAKSHSNLSTKMSTLSYRPSDNVSSSSKKPVPCFEVE) lie on the Cytoplasmic side of the membrane. Over residues 335 to 350 (STLSYRPSDNVSSSSK) the composition is skewed to polar residues. A disordered region spans residues 335–359 (STLSYRPSDNVSSSSKKPVPCFEVE). C355 is lipidated: S-palmitoyl cysteine.

Belongs to the G-protein coupled receptor 1 family. As to quaternary structure, interacts with MAS1. Interacts with ARRB1. Interacts with FLNA (via filamin repeat 21); increases PKA-mediated phosphorylation of FLNA. In terms of processing, C-terminal Ser or Thr residues may be phosphorylated.

It localises to the cell membrane. Functionally, receptor for angiotensin II, a vasoconstricting peptide, which acts as a key regulator of blood pressure and sodium retention by the kidney. The activated receptor in turn couples to G-alpha proteins G(q) (GNAQ, GNA11, GNA14 or GNA15) and thus activates phospholipase C and increases the cytosolic Ca(2+) concentrations, which in turn triggers cellular responses such as stimulation of protein kinase C. This chain is Type-1 angiotensin II receptor (AGTR1), found in Oryctolagus cuniculus (Rabbit).